The primary structure comprises 232 residues: 2,3,4,5-tetrahydropyridine-2,6-dicarboxylate N-acetyltransferase (232 aa).

It belongs to the transferase hexapeptide repeat family. DapH subfamily.

It carries out the reaction (S)-2,3,4,5-tetrahydrodipicolinate + acetyl-CoA + H2O = L-2-acetamido-6-oxoheptanedioate + CoA. It participates in amino-acid biosynthesis; L-lysine biosynthesis via DAP pathway; LL-2,6-diaminopimelate from (S)-tetrahydrodipicolinate (acetylase route): step 1/3. In terms of biological role, catalyzes the transfer of an acetyl group from acetyl-CoA to tetrahydrodipicolinate. The polypeptide is 2,3,4,5-tetrahydropyridine-2,6-dicarboxylate N-acetyltransferase (Streptococcus sanguinis (strain SK36)).